The chain runs to 346 residues: Sensor protein kinase GraS (346 aa).

2 helical membrane passes run 15-35 (MNWIFWILFLNLLMLGISLID) and 43-63 (LFYIVSLNLSLTMIFLILTYF). A Histidine kinase domain is found at 126–332 (EFVHDIKTPV…TVRLIFPLQN (207 aa)).

In terms of assembly, interacts with GraX.

Its subcellular location is the cell membrane. It catalyses the reaction ATP + protein L-histidine = ADP + protein N-phospho-L-histidine.. Its function is as follows. Member of the two-component regulatory system GraR/GraS involved in resistance against cationic antimicrobial peptides (CAMPs). Functions as a sensor protein kinase which phosphorylates GraR through the auxiliary protein GraX. In turn, GraR up-regulates many genes such as adhesins, exoproteins, transporters, toxins, and proteins involved in cell wall synthesis. Down-regulates the expression of many genes involved in RNA and amino acid synthesis or glycolysis. The polypeptide is Sensor protein kinase GraS (graS) (Staphylococcus aureus (strain bovine RF122 / ET3-1)).